A 290-amino-acid chain; its full sequence is Protein MGF 110-9L (290 aa).

A signal peptide spans M1 to S19. The A repeat unit spans residues M1–A160. 2 consecutive transmembrane segments (helical) span residues V128 to V148 and L163 to N183. The stretch at T161–L290 is one B repeat.

It belongs to the asfivirus MGF 110 family.

The protein localises to the membrane. The polypeptide is Protein MGF 110-9L (Ornithodoros (relapsing fever ticks)).